The primary structure comprises 45 residues: MTKRTFGGTSRKRKRVSGFRVRMRSHTGRRVIKSRRKRGRDRIAV.

The disordered stretch occupies residues 1–45 (MTKRTFGGTSRKRKRVSGFRVRMRSHTGRRVIKSRRKRGRDRIAV). The span at 10 to 45 (SRKRKRVSGFRVRMRSHTGRRVIKSRRKRGRDRIAV) shows a compositional bias: basic residues.

The protein belongs to the bacterial ribosomal protein bL34 family.

The polypeptide is Large ribosomal subunit protein bL34 (Prochlorococcus marinus (strain MIT 9515)).